Here is a 212-residue protein sequence, read N- to C-terminus: Response regulator SsrB (212 aa).

The interval 1-138 (MKEYKILLVD…PTLNREAILA (138 aa)) is required for prevention of DNA binding in absence of phosphorylation and for full stimulation of activity by acidic pH. Positions 5 to 121 (KILLVDDHEI…VLLAALQTVA (117 aa)) constitute a Response regulatory domain. Aspartate 56 is subject to 4-aspartylphosphate. The region spanning 143–208 (DTTNHQLLTL…ELLNCARRMR (66 aa)) is the HTH luxR-type domain. The segment at residues 167–186 (NHGISEKLHISIKTVETHRM) is a DNA-binding region (H-T-H motif). Cysteine 203 is subject to S-nitrosocysteine.

Homodimer; disulfide-linked; dimerizes upon DNA-binding. Post-translationally, ssrB phosphorylated on Asp-56 activates the expression of virulence genes whereas the unphosphorylated form controls biofilm formation. Independently of SsrA, can be phosphorylated by small inorganic phosphate donors (such as acetyl phosphate or phosphoramidate). Disulfide bond formation at Cys-203 is not required for dimerization. In terms of processing, cys-203 may serve as a redox sensor that is nitrosylated in presence of reactive nitrogen species (RNS) generated by the host, the modification modulates its DNA-binding activity. Cys-203 is relatively resistant to oxidation by hydrogen peroxide.

The protein localises to the cytoplasm. Functionally, member of the two-component regulatory system SsrA/SsrB (SpiR/SsrB) that is required for intracellular proliferation and systemic dissemination within the host. When inside acidic Salmonella-containing vesicles (SCV) within host cells the SsrA sensor kinase autophosphorylates and the phosphoryl group is transferred to the response regulator SsrB; phosphorylated SsrB activates the expression of genes encoding virulence proteins, including pathogenicity island 2 (SPI2) and other horizontally acquired genes, but also ancestral genes; it can stimulate gene expression both by recruiting RNA polymerase and by antagonizing the action of the transcriptional repressor hns (H-NS). Can also act independently of sensor kinase ssrA to support the dormant carrier state by directing the transcription of factors required for biofilm formation. DNA-binding is stimulated by acidic pH conditions, and binding promotes bending of DNA both upstream and downstream of binding sites. Binds a degenerate 18-basepair palindromic sequence with a 7-4-7 internal organization, and regulates gene expression from 86 operons. When phosphorylated, activates the transcription of the ABC transporter complex dalSTUV, which helps protect the organism from oxidative killing by host neutrophils. Binds the phoP promoter to stimulate expression in acidic pH conditions. Antagonizes hns to activate the transcription of ugtL. Following invasion of host cells, binds the hilD and hilA regulatory regions to repress their transcription and consequently to repress transcription of pathogenicity island 1 (SPI1) encoding genes involved in host cell invasion. Binds the promoters of the flagellar master regulators flhD and flhC to repress their expression and consequently to suppress flagellar motility and promote evasion of the host inflammasome during infection of host cells. Activates expression of sseI/srfH, sifA, sifB, sseJ and regulates its own expression. When unphosphorylated, relieves the hns-mediated repression of master biofilm regulator csgD by binding and bending the csgD regulatory region. May act as early as in the lumen of the host small intestine, to activate the expression of virulence proteins prior to invasion of host cells. This is Response regulator SsrB from Salmonella typhimurium (strain LT2 / SGSC1412 / ATCC 700720).